Reading from the N-terminus, the 434-residue chain is Nicotinate phosphoribosyltransferase (434 aa).

His-242 carries the post-translational modification Phosphohistidine; by autocatalysis.

The protein belongs to the NAPRTase family. Post-translationally, transiently phosphorylated on a His residue during the reaction cycle. Phosphorylation strongly increases the affinity for substrates and increases the rate of nicotinate D-ribonucleotide production. Dephosphorylation regenerates the low-affinity form of the enzyme, leading to product release.

It carries out the reaction nicotinate + 5-phospho-alpha-D-ribose 1-diphosphate + ATP + H2O = nicotinate beta-D-ribonucleotide + ADP + phosphate + diphosphate. The protein operates within cofactor biosynthesis; NAD(+) biosynthesis; nicotinate D-ribonucleotide from nicotinate: step 1/1. Catalyzes the synthesis of beta-nicotinate D-ribonucleotide from nicotinate and 5-phospho-D-ribose 1-phosphate at the expense of ATP. The protein is Nicotinate phosphoribosyltransferase of Mesorhizobium japonicum (strain LMG 29417 / CECT 9101 / MAFF 303099) (Mesorhizobium loti (strain MAFF 303099)).